The chain runs to 449 residues: Glutamate--tRNA ligase 1 (449 aa).

Positions 11–21 (PSPTGSLHVGN) match the 'HIGH' region motif. The 'KMSKS' region signature appears at 242-246 (PLSKR). Residue lysine 245 participates in ATP binding.

This sequence belongs to the class-I aminoacyl-tRNA synthetase family. Glutamate--tRNA ligase type 1 subfamily. As to quaternary structure, monomer.

The protein resides in the cytoplasm. The enzyme catalyses tRNA(Glu) + L-glutamate + ATP = L-glutamyl-tRNA(Glu) + AMP + diphosphate. Catalyzes the attachment of glutamate to tRNA(Glu) in a two-step reaction: glutamate is first activated by ATP to form Glu-AMP and then transferred to the acceptor end of tRNA(Glu). In Parvibaculum lavamentivorans (strain DS-1 / DSM 13023 / NCIMB 13966), this protein is Glutamate--tRNA ligase 1.